Consider the following 419-residue polypeptide: Imidazolonepropionase (419 aa).

Residues His84 and His86 each contribute to the Fe(3+) site. His84 and His86 together coordinate Zn(2+). Arg93, Tyr156, and His189 together coordinate 4-imidazolone-5-propanoate. Residue Tyr156 coordinates N-formimidoyl-L-glutamate. A Fe(3+)-binding site is contributed by His254. Residue His254 participates in Zn(2+) binding. Gln257 lines the 4-imidazolone-5-propanoate pocket. Residue Asp329 coordinates Fe(3+). Position 329 (Asp329) interacts with Zn(2+). Residues Asn331 and Gly333 each contribute to the N-formimidoyl-L-glutamate site. 4-imidazolone-5-propanoate is bound at residue Thr334.

It belongs to the metallo-dependent hydrolases superfamily. HutI family. Monomer. Forms a tightly packed homodimer in the crystal, but this seems to be an artifact of crystallization. Zn(2+) is required as a cofactor. The cofactor is Fe(3+).

The protein localises to the cytoplasm. It carries out the reaction 4-imidazolone-5-propanoate + H2O = N-formimidoyl-L-glutamate. The protein operates within amino-acid degradation; L-histidine degradation into L-glutamate; N-formimidoyl-L-glutamate from L-histidine: step 3/3. In terms of biological role, catalyzes the hydrolytic cleavage of the carbon-nitrogen bond in imidazolone-5-propanoate to yield N-formimidoyl-L-glutamate. It is the third step in the universal histidine degradation pathway. The chain is Imidazolonepropionase from Agrobacterium fabrum (strain C58 / ATCC 33970) (Agrobacterium tumefaciens (strain C58)).